The chain runs to 1082 residues: Integrator complex subunit 3 homolog (1082 aa).

Disordered stretches follow at residues 483–563 (PGPP…VSDD), 923–945 (YPSN…TAPT), and 1005–1082 (DETS…SDSD). 2 stretches are compositionally biased toward low complexity: residues 517 to 528 (PAAKAASTAASA) and 542 to 555 (TKPA…TTTT). Positions 936-945 (KSAQQNTAPT) are enriched in polar residues. 2 stretches are compositionally biased toward low complexity: residues 1008–1018 (STTVGRRGTSS) and 1033–1056 (EKAA…ASAK).

Belongs to the Integrator subunit 3 family. Belongs to the multiprotein complex Integrator. The core complex associates with protein phosphatase 2A subunits, to form the Integrator-PP2A (INTAC) complex.

It localises to the nucleus. The protein localises to the cytoplasm. Its function is as follows. Component of the integrator complex, a multiprotein complex that terminates RNA polymerase II (Pol II) transcription in the promoter-proximal region of genes. The integrator complex provides a quality checkpoint during transcription elongation by driving premature transcription termination of transcripts that are unfavorably configured for transcriptional elongation: the complex terminates transcription by (1) catalyzing dephosphorylation of the C-terminal domain (CTD) of Pol II subunit Polr2A/Rbp1 and Spt5, and (2) degrading the exiting nascent RNA transcript via endonuclease activity. The integrator complex is also involved in the 3'-end processing of the U7 snRNA, and also the spliceosomal snRNAs U1, U2, U4 and U5. In Anopheles gambiae (African malaria mosquito), this protein is Integrator complex subunit 3 homolog.